A 310-amino-acid polypeptide reads, in one-letter code: 2-phospho-L-lactate transferase (310 aa).

7,8-didemethyl-8-hydroxy-5-deazariboflavin-binding residues include Asp50 and Arg89.

It belongs to the CofD family. As to quaternary structure, homodimer. Mg(2+) serves as cofactor.

It catalyses the reaction (2S)-lactyl-2-diphospho-5'-guanosine + 7,8-didemethyl-8-hydroxy-5-deazariboflavin = oxidized coenzyme F420-0 + GMP + H(+). It functions in the pathway cofactor biosynthesis; coenzyme F420 biosynthesis. In terms of biological role, catalyzes the transfer of the 2-phospholactate moiety from (2S)-lactyl-2-diphospho-5'-guanosine to 7,8-didemethyl-8-hydroxy-5-deazariboflavin (FO) with the formation of oxidized coenzyme F420-0 and GMP. The polypeptide is 2-phospho-L-lactate transferase (Methanopyrus kandleri (strain AV19 / DSM 6324 / JCM 9639 / NBRC 100938)).